The chain runs to 385 residues: Chaperone protein DnaJ (385 aa).

Positions 5–70 (DFYDVLGVSR…QSRAAYDQFG (66 aa)) constitute a J domain. The CR-type zinc-finger motif lies at 143-221 (GKKAQVRVPG…CHGAGRVEKE (79 aa)). Positions 156, 159, 173, 176, 195, 198, 209, and 212 each coordinate Zn(2+). CXXCXGXG motif repeat units follow at residues 156 to 163 (CEVCTGTG), 173 to 180 (CPTCQGHG), 195 to 202 (CPTCHGRG), and 209 to 216 (CTNCHGAG).

The protein belongs to the DnaJ family. In terms of assembly, homodimer. Zn(2+) is required as a cofactor.

Its subcellular location is the cytoplasm. Functionally, participates actively in the response to hyperosmotic and heat shock by preventing the aggregation of stress-denatured proteins and by disaggregating proteins, also in an autonomous, DnaK-independent fashion. Unfolded proteins bind initially to DnaJ; upon interaction with the DnaJ-bound protein, DnaK hydrolyzes its bound ATP, resulting in the formation of a stable complex. GrpE releases ADP from DnaK; ATP binding to DnaK triggers the release of the substrate protein, thus completing the reaction cycle. Several rounds of ATP-dependent interactions between DnaJ, DnaK and GrpE are required for fully efficient folding. Also involved, together with DnaK and GrpE, in the DNA replication of plasmids through activation of initiation proteins. This chain is Chaperone protein DnaJ, found in Parvibaculum lavamentivorans (strain DS-1 / DSM 13023 / NCIMB 13966).